The following is a 900-amino-acid chain: Iodate reductase subunit IdrA (900 aa).

A disordered region spans residues 1-21 (MSENIKQGGAGTFMQAPQDSV). Positions 35, 38, and 42 each coordinate [3Fe-4S] cluster.

It belongs to the prokaryotic molybdopterin-containing oxidoreductase family. In terms of assembly, the iodate reductase (Idr) complex is composed of a molybdopterin-dependent iodate reductase (IdrA and IdrB subunits) and two associated peroxidases (IdrP1 and IdrP2). [3Fe-4S] cluster is required as a cofactor. It depends on Mo-bis(molybdopterin guanine dinucleotide) as a cofactor.

It is found in the periplasm. Its function is as follows. Involved in iodate respiration. May accept electrons from cytochrome c551, and catalyze the reduction of iodate (IO(3)(-)) to produce the chemically unstable intermediate hypoiodous acid (HIO). This intermediate then undergoes abiotic disproportionation to yield two molecules of iodide (I(-)) and one molecule of iodate. The resultant iodate subsequently cycles back into the reductive pathway. The initial reduction of iodate may inadvertently produce low levels of incidental toxic H(2)O(2), which is detoxified by IdrP1 and IdrP2. The sequence is that of Iodate reductase subunit IdrA from Denitromonas iodatirespirans.